The chain runs to 87 residues: MAEQQKTRVTVDIYGQQYTIVGTESSSHIRLVASIVDDKMREISEKNPTLDISKLAVLTAINIVHDYIKLKEEYDRLLQKLHKEKDE.

Residues 64 to 87 (VHDYIKLKEEYDRLLQKLHKEKDE) adopt a coiled-coil conformation.

It belongs to the ZapA family. Type 2 subfamily. As to quaternary structure, homodimer. Interacts with FtsZ.

The protein localises to the cytoplasm. Functionally, activator of cell division through the inhibition of FtsZ GTPase activity, therefore promoting FtsZ assembly into bundles of protofilaments necessary for the formation of the division Z ring. It is recruited early at mid-cell but it is not essential for cell division. The sequence is that of Cell division protein ZapA from Geobacillus sp. (strain WCH70).